The primary structure comprises 333 residues: 4-hydroxy-3-methylbut-2-enyl diphosphate reductase (333 aa).

[4Fe-4S] cluster is bound at residue Cys-20. Positions 49 and 85 each coordinate (2E)-4-hydroxy-3-methylbut-2-enyl diphosphate. Dimethylallyl diphosphate is bound by residues His-49 and His-85. Isopentenyl diphosphate contacts are provided by His-49 and His-85. Residue Cys-107 coordinates [4Fe-4S] cluster. His-135 serves as a coordination point for (2E)-4-hydroxy-3-methylbut-2-enyl diphosphate. His-135 lines the dimethylallyl diphosphate pocket. Position 135 (His-135) interacts with isopentenyl diphosphate. Glu-137 acts as the Proton donor in catalysis. Thr-176 is a binding site for (2E)-4-hydroxy-3-methylbut-2-enyl diphosphate. Cys-206 is a binding site for [4Fe-4S] cluster. Ser-234, Ser-235, Asn-236, and Ser-279 together coordinate (2E)-4-hydroxy-3-methylbut-2-enyl diphosphate. 4 residues coordinate dimethylallyl diphosphate: Ser-234, Ser-235, Asn-236, and Ser-279. The isopentenyl diphosphate site is built by Ser-234, Ser-235, Asn-236, and Ser-279.

This sequence belongs to the IspH family. Requires [4Fe-4S] cluster as cofactor.

It catalyses the reaction isopentenyl diphosphate + 2 oxidized [2Fe-2S]-[ferredoxin] + H2O = (2E)-4-hydroxy-3-methylbut-2-enyl diphosphate + 2 reduced [2Fe-2S]-[ferredoxin] + 2 H(+). The enzyme catalyses dimethylallyl diphosphate + 2 oxidized [2Fe-2S]-[ferredoxin] + H2O = (2E)-4-hydroxy-3-methylbut-2-enyl diphosphate + 2 reduced [2Fe-2S]-[ferredoxin] + 2 H(+). Its pathway is isoprenoid biosynthesis; dimethylallyl diphosphate biosynthesis; dimethylallyl diphosphate from (2E)-4-hydroxy-3-methylbutenyl diphosphate: step 1/1. The protein operates within isoprenoid biosynthesis; isopentenyl diphosphate biosynthesis via DXP pathway; isopentenyl diphosphate from 1-deoxy-D-xylulose 5-phosphate: step 6/6. Catalyzes the conversion of 1-hydroxy-2-methyl-2-(E)-butenyl 4-diphosphate (HMBPP) into a mixture of isopentenyl diphosphate (IPP) and dimethylallyl diphosphate (DMAPP). Acts in the terminal step of the DOXP/MEP pathway for isoprenoid precursor biosynthesis. The protein is 4-hydroxy-3-methylbut-2-enyl diphosphate reductase of Rhizobium leguminosarum bv. trifolii (strain WSM2304).